Consider the following 172-residue polypeptide: MLSSLGNPRQAATQLLNFALILSTAFMMWKGLSVATDSPSPIVVVLSGSMEPAFQRGDLLFLWNRNIVQETDVGEIVVYNVKGKDIPIVHRIVRKFGAGPKAKLLTKGDNNAADDTELYAKDQDYLERKDIIGSVVAYIPFVGYVTIMLSEHPWMKTAMLGIMGLMVVLQRE.

At 1-14 the chain is on the cytoplasmic side; it reads MLSSLGNPRQAATQ. Residues 15–35 form a helical; Signal-anchor for type II membrane protein membrane-spanning segment; that stretch reads LLNFALILSTAFMMWKGLSVA. Residues 36–172 are Lumenal-facing; sequence TDSPSPIVVV…MGLMVVLQRE (137 aa). Catalysis depends on charge relay system residues Ser49, His90, and Asp115. The segment at 158 to 169 is C-terminal short (CTS) helix; the sequence is AMLGIMGLMVVL.

It belongs to the peptidase S26B family. Component of the signal peptidase complex (SPC) composed of a catalytic subunit SEC11 and three accessory subunits SPC1, SPC2 and SPC3. The complex induces a local thinning of the ER membrane which is used to measure the length of the signal peptide (SP) h-region of protein substrates. This ensures the selectivity of the complex towards h-regions shorter than 18-20 amino acids. SPC associates with the translocon complex.

The protein resides in the endoplasmic reticulum membrane. The enzyme catalyses Cleavage of hydrophobic, N-terminal signal or leader sequences from secreted and periplasmic proteins.. Functionally, catalytic component of the signal peptidase complex (SPC) which catalyzes the cleavage of N-terminal signal sequences from nascent proteins as they are translocated into the lumen of the endoplasmic reticulum. Specifically cleaves N-terminal signal peptides that contain a hydrophobic alpha-helix (h-region) shorter than 18-20 amino acids. This Pyricularia oryzae (strain 70-15 / ATCC MYA-4617 / FGSC 8958) (Rice blast fungus) protein is Signal peptidase complex catalytic subunit SEC11 (SEC11).